Here is a 143-residue protein sequence, read N- to C-terminus: UPF0306 protein plu4501 (143 aa).

The protein belongs to the UPF0306 family.

The polypeptide is UPF0306 protein plu4501 (Photorhabdus laumondii subsp. laumondii (strain DSM 15139 / CIP 105565 / TT01) (Photorhabdus luminescens subsp. laumondii)).